Reading from the N-terminus, the 214-residue chain is Adenylate kinase (214 aa).

10–15 serves as a coordination point for ATP; it reads GAGKGT. An NMP region spans residues 30–59; the sequence is STGDMLRAAIKAGTELGLKAKAVMDAGQLV. AMP is bound by residues threonine 31, arginine 36, 57–59, 85–88, and glutamine 92; these read QLV and GFPR. The segment at 122–159 is LID; it reads GRRVHSGSGRTYHVVFNPPKVEGKDDVTGEDLVIRADD. Residues arginine 123 and 132 to 133 each bind ATP; that span reads TY. AMP contacts are provided by arginine 156 and arginine 167. ATP is bound at residue glutamine 200.

The protein belongs to the adenylate kinase family. As to quaternary structure, monomer.

The protein resides in the cytoplasm. The catalysed reaction is AMP + ATP = 2 ADP. It functions in the pathway purine metabolism; AMP biosynthesis via salvage pathway; AMP from ADP: step 1/1. Functionally, catalyzes the reversible transfer of the terminal phosphate group between ATP and AMP. Plays an important role in cellular energy homeostasis and in adenine nucleotide metabolism. The polypeptide is Adenylate kinase (Aeromonas hydrophila subsp. hydrophila (strain ATCC 7966 / DSM 30187 / BCRC 13018 / CCUG 14551 / JCM 1027 / KCTC 2358 / NCIMB 9240 / NCTC 8049)).